The following is a 338-amino-acid chain: Probable 1-aminocyclopropane-1-carboxylate deaminase (338 aa).

Lys-51 carries the post-translational modification N6-(pyridoxal phosphate)lysine. The Nucleophile role is filled by Ser-78.

The protein belongs to the ACC deaminase/D-cysteine desulfhydrase family. It depends on pyridoxal 5'-phosphate as a cofactor.

The enzyme catalyses 1-aminocyclopropane-1-carboxylate + H2O = 2-oxobutanoate + NH4(+). Its function is as follows. Catalyzes a cyclopropane ring-opening reaction, the irreversible conversion of 1-aminocyclopropane-1-carboxylate (ACC) to ammonia and alpha-ketobutyrate. The protein is Probable 1-aminocyclopropane-1-carboxylate deaminase of Schizosaccharomyces pombe (strain 972 / ATCC 24843) (Fission yeast).